Consider the following 520-residue polypeptide: Nucleolar protein 12 (520 aa).

Disordered regions lie at residues 1–29 (MGKK…NVSV) and 41–185 (AGPV…DDDE). Over residues 78–95 (ASEDQFMEDAPESPDAAE) the composition is skewed to acidic residues. A compositionally biased stretch (basic and acidic residues) spans 120–132 (SYMRRLAKEEQKE). Positions 144–168 (LEEESEDGEKESPQSEDGESEDEGA) are enriched in acidic residues. RRM domains follow at residues 191–303 (RTVF…NVAH) and 311–421 (RCVF…RAKK). Residues 472–520 (EGNRATADGSSRIRVRTKSRGSKAKKDSRSKKRAAAYKAAGGKKAKIGK) are disordered. A compositionally biased stretch (basic residues) spans 484–520 (IRVRTKSRGSKAKKDSRSKKRAAAYKAAGGKKAKIGK).

This sequence belongs to the RRM RBM34 family.

It is found in the nucleus. The protein resides in the nucleolus. Involved in pre-25S rRNA processing. The polypeptide is Nucleolar protein 12 (nop12) (Emericella nidulans (strain FGSC A4 / ATCC 38163 / CBS 112.46 / NRRL 194 / M139) (Aspergillus nidulans)).